We begin with the raw amino-acid sequence, 518 residues long: Protein translocase subunit SecD (518 aa).

Helical transmembrane passes span 9 to 29 (IVLS…NFIQ), 356 to 376 (GKKA…LSYG), 377 to 397 (VIGL…LALL), 406 to 426 (LPGI…NVLI), 451 to 473 (AFAT…YIFG), and 486 to 506 (IGII…IDIW).

The protein belongs to the SecD/SecF family. SecD subfamily. Forms a complex with SecF. Part of the essential Sec protein translocation apparatus which comprises SecA, SecYEG and auxiliary proteins SecDF-YajC and YidC.

The protein localises to the cell inner membrane. Part of the Sec protein translocase complex. Interacts with the SecYEG preprotein conducting channel. SecDF uses the proton motive force (PMF) to complete protein translocation after the ATP-dependent function of SecA. This chain is Protein translocase subunit SecD, found in Rickettsia typhi (strain ATCC VR-144 / Wilmington).